The primary structure comprises 138 residues: Putative pre-16S rRNA nuclease (138 aa).

This sequence belongs to the YqgF nuclease family.

The protein localises to the cytoplasm. In terms of biological role, could be a nuclease involved in processing of the 5'-end of pre-16S rRNA. The polypeptide is Putative pre-16S rRNA nuclease (Salmonella schwarzengrund (strain CVM19633)).